We begin with the raw amino-acid sequence, 500 residues long: Putative antiporter subunit mnhD2 (500 aa).

14 helical membrane passes run methionine 2–phenylalanine 22, isoleucine 32–valine 52, leucine 78–phenylalanine 98, phenylalanine 108–serine 128, leucine 130–leucine 150, isoleucine 161–leucine 181, isoleucine 209–leucine 229, leucine 240–phenylalanine 260, threonine 273–tyrosine 293, isoleucine 308–phenylalanine 328, leucine 330–methionine 350, phenylalanine 368–glycine 388, glycine 403–phenylalanine 423, and glycine 450–leucine 470.

This sequence belongs to the CPA3 antiporters (TC 2.A.63) subunit D family. As to quaternary structure, may form a heterooligomeric complex that consists of seven subunits: mnhA2, mnhB2, mnhC2, mnhD2, mnhE2, mnhF2 and mnhG2.

The protein resides in the cell membrane. In Staphylococcus epidermidis (strain ATCC 12228 / FDA PCI 1200), this protein is Putative antiporter subunit mnhD2 (mnhD2).